We begin with the raw amino-acid sequence, 232 residues long: Probable metallo-hydrolase M6_Spy0554 (232 aa).

Residues H75, H77, D79, H80, H155, D174, and H215 each coordinate Zn(2+).

It depends on Zn(2+) as a cofactor.

In Streptococcus pyogenes serotype M6 (strain ATCC BAA-946 / MGAS10394), this protein is Probable metallo-hydrolase M6_Spy0554.